A 109-amino-acid polypeptide reads, in one-letter code: Putative double-stranded DNA mimic protein YciU (109 aa).

Belongs to the putative dsDNA mimic protein family.

Its function is as follows. May act as a double-stranded DNA (dsDNA) mimic. Probably regulates the activity of a dsDNA-binding protein. This Escherichia coli O45:K1 (strain S88 / ExPEC) protein is Putative double-stranded DNA mimic protein YciU.